Here is a 342-residue protein sequence, read N- to C-terminus: Phenylalanine--tRNA ligase alpha subunit (342 aa).

Glu-257 lines the Mg(2+) pocket.

It belongs to the class-II aminoacyl-tRNA synthetase family. Phe-tRNA synthetase alpha subunit type 1 subfamily. As to quaternary structure, tetramer of two alpha and two beta subunits. It depends on Mg(2+) as a cofactor.

The protein resides in the cytoplasm. The enzyme catalyses tRNA(Phe) + L-phenylalanine + ATP = L-phenylalanyl-tRNA(Phe) + AMP + diphosphate + H(+). This Chlamydia trachomatis serovar D (strain ATCC VR-885 / DSM 19411 / UW-3/Cx) protein is Phenylalanine--tRNA ligase alpha subunit (pheS).